The following is a 786-amino-acid chain: Endonuclease MutS2 (786 aa).

Residue 334–341 participates in ATP binding; that stretch reads GPNTGGKT. The 76-residue stretch at 711–786 folds into the Smr domain; the sequence is LDLRGERYEN…GNGATVVYFK (76 aa).

This sequence belongs to the DNA mismatch repair MutS family. MutS2 subfamily. Homodimer. Binds to stalled ribosomes, contacting rRNA.

In terms of biological role, endonuclease that is involved in the suppression of homologous recombination and thus may have a key role in the control of bacterial genetic diversity. Its function is as follows. Acts as a ribosome collision sensor, splitting the ribosome into its 2 subunits. Detects stalled/collided 70S ribosomes which it binds and splits by an ATP-hydrolysis driven conformational change. Acts upstream of the ribosome quality control system (RQC), a ribosome-associated complex that mediates the extraction of incompletely synthesized nascent chains from stalled ribosomes and their subsequent degradation. Probably generates substrates for RQC. This chain is Endonuclease MutS2, found in Ligilactobacillus salivarius (strain UCC118) (Lactobacillus salivarius).